The following is a 106-amino-acid chain: Phosphoribosyl-ATP pyrophosphatase (106 aa).

It belongs to the PRA-PH family.

The protein localises to the cytoplasm. It carries out the reaction 1-(5-phospho-beta-D-ribosyl)-ATP + H2O = 1-(5-phospho-beta-D-ribosyl)-5'-AMP + diphosphate + H(+). The protein operates within amino-acid biosynthesis; L-histidine biosynthesis; L-histidine from 5-phospho-alpha-D-ribose 1-diphosphate: step 2/9. The protein is Phosphoribosyl-ATP pyrophosphatase of Geotalea daltonii (strain DSM 22248 / JCM 15807 / FRC-32) (Geobacter daltonii).